The sequence spans 207 residues: Thymidylate kinase (207 aa).

Residues 11–49 (EGIDGSGKSTQARRLAEHLRDTGRDPLLTREPGGSPGAE) are disordered. 12-19 (GIDGSGKS) serves as a coordination point for ATP. The segment covering 24 to 38 (RLAEHLRDTGRDPLL) has biased composition (basic and acidic residues).

Belongs to the thymidylate kinase family.

The enzyme catalyses dTMP + ATP = dTDP + ADP. Functionally, phosphorylation of dTMP to form dTDP in both de novo and salvage pathways of dTTP synthesis. In Dinoroseobacter shibae (strain DSM 16493 / NCIMB 14021 / DFL 12), this protein is Thymidylate kinase.